Consider the following 82-residue polypeptide: Diphthamide biosynthesis protein 3 (82 aa).

One can recognise a DPH-type MB domain in the interval 4 to 60; the sequence is FHDEVEIEDFQYDEDSETYFYPCPCGDNFAITKEDLENGEDVATCPSCSLIIKVIYD. Fe cation is bound by residues C26, C28, C48, and C51.

It belongs to the DPH3 family. In terms of assembly, component of the 2-(3-amino-3-carboxypropyl)histidine synthase complex composed of DPH1, DPH2, DPH3 and a NADH-dependent reductase. Interacts with SERGEF. Fe(2+) is required as a cofactor. Widely expressed with highest levels in heart, liver, kidney and testis.

The protein resides in the cytoplasm. It localises to the nucleus. The catalysed reaction is [3Fe-4S](1+)-[protein] + Fe(2+)-[Dph3] = [3Fe-4S](0)-[protein] + Fe(3+)-[Dph3]. The enzyme catalyses 2 [3Fe-4S](0)-[protein] + 2 Fe(2+)-[Dph3] + NADH = 2 [4Fe-4S](1+)-[protein] + 2 [Dph3] + NAD(+) + H(+). Its pathway is protein modification; peptidyl-diphthamide biosynthesis. Its function is as follows. Required for the first step of diphthamide biosynthesis, a post-translational modification of histidine which occurs in elongation factor 2. DPH1 and DPH2 transfer a 3-amino-3-carboxypropyl (ACP) group from S-adenosyl-L-methionine (SAM) to a histidine residue, the reaction is assisted by a reduction system comprising DPH3 and a NADH-dependent reductase. Acts as an electron donor to reduce the Fe-S cluster in DPH1-DPH2 keeping the [4Fe-4S] clusters in the active and reduced state. Restores iron to DPH1-DPH2 iron-sulfur clusters which have degraded from [4Fe-4S] to [3Fe-4S] by donating an iron atom to reform [4Fe-4S] clusters, in a manner dependent on the presence of elongation factor 2 and SAM. Associates with the elongator complex and is required for tRNA Wobble base modifications mediated by the elongator complex. The elongator complex is required for multiple tRNA modifications, including mcm5U (5-methoxycarbonylmethyl uridine), mcm5s 2U (5-methoxycarbonylmethyl-2-thiouridine), and ncm5U (5-carbamoylmethyl uridine). The sequence is that of Diphthamide biosynthesis protein 3 from Mus musculus (Mouse).